We begin with the raw amino-acid sequence, 176 residues long: Protein CURLY FLAG LEAF 2 (176 aa).

An EAR motif is present at residues 41–46 (FLELSS). Positions 48–82 (FSVPSHLEQCLDLKTGEIYYRSWNSGMRVKEDPRK) constitute a WW domain. Disordered regions lie at residues 77–106 (KEDP…SSEE) and 111–130 (YESE…YHKE). Residues 93 to 106 (SSGESSGTVFSSEE) are compositionally biased toward low complexity.

As to quaternary structure, may interact with BHLH122/CFLAP1 and BHLH80/CFLAP2.

Its function is as follows. May negatively regulate the cuticle development by interacting with the HD-ZIP IV transcription factor HDG1. This chain is Protein CURLY FLAG LEAF 2, found in Arabidopsis thaliana (Mouse-ear cress).